The chain runs to 143 residues: WW domain-containing protein C660.05 (143 aa).

In terms of domain architecture, WW spans 9–44; sequence GLPAGWVAQWDPTYQAYFYINETFEGAQPQWEPPIP. The interval 115-143 is disordered; sequence HHGPLHGPHGGFGGRGGGRMGGRGGRGRR.

This is WW domain-containing protein C660.05 from Schizosaccharomyces pombe (strain 972 / ATCC 24843) (Fission yeast).